The primary structure comprises 218 residues: MANSSPVYDWFQERLEIQDIADDIGSKYVPPHVNIFYCLGGITLVCFLIQFATGFAMTFYYKPTVAEAYKSVEYLMTDVSFGWLIRSVHRWSASMMVLMLILHVFRVYLTGGFKRPRELTWVTGVTMAVITVSFGVTGYSLPWDQVGYWAVKIVSGVPAAIPVVGDFMVELLRGGESVGQATLTRFYSLHTFVMPWLLAVFMLMHFLMIRKQGISGPL.

Residues 35-55 (IFYCLGGITLVCFLIQFATGF) traverse the membrane as a helical segment. Cys38 contributes to the heme c binding site. Heme b is bound by residues His89 and His103. 3 consecutive transmembrane segments (helical) span residues 93-113 (ASMM…TGGF), 119-139 (LTWV…VTGY), and 189-209 (LHTF…FLMI). The heme b site is built by His190 and His205.

Belongs to the cytochrome b family. PetB subfamily. As to quaternary structure, the 4 large subunits of the cytochrome b6-f complex are cytochrome b6, subunit IV (17 kDa polypeptide, PetD), cytochrome f and the Rieske protein, while the 4 small subunits are PetG, PetL, PetM and PetN. The complex functions as a dimer. The cofactor is heme b. Heme c serves as cofactor.

The protein resides in the cellular thylakoid membrane. Functionally, component of the cytochrome b6-f complex, which mediates electron transfer between photosystem II (PSII) and photosystem I (PSI), cyclic electron flow around PSI, and state transitions. In Synechococcus sp. (strain CC9605), this protein is Cytochrome b6.